A 307-amino-acid chain; its full sequence is Aspartate carbamoyltransferase catalytic subunit (307 aa).

2 residues coordinate carbamoyl phosphate: R51 and T52. K80 contacts L-aspartate. Residues R101, H129, and Q132 each contribute to the carbamoyl phosphate site. 2 residues coordinate L-aspartate: R162 and R225. Carbamoyl phosphate contacts are provided by L264 and P265.

The protein belongs to the aspartate/ornithine carbamoyltransferase superfamily. ATCase family. In terms of assembly, heterododecamer (2C3:3R2) of six catalytic PyrB chains organized as two trimers (C3), and six regulatory PyrI chains organized as three dimers (R2).

The catalysed reaction is carbamoyl phosphate + L-aspartate = N-carbamoyl-L-aspartate + phosphate + H(+). Its pathway is pyrimidine metabolism; UMP biosynthesis via de novo pathway; (S)-dihydroorotate from bicarbonate: step 2/3. Functionally, catalyzes the condensation of carbamoyl phosphate and aspartate to form carbamoyl aspartate and inorganic phosphate, the committed step in the de novo pyrimidine nucleotide biosynthesis pathway. This is Aspartate carbamoyltransferase catalytic subunit from Lachnoclostridium phytofermentans (strain ATCC 700394 / DSM 18823 / ISDg) (Clostridium phytofermentans).